Here is a 68-residue protein sequence, read N- to C-terminus: Ribosome modulation factor (68 aa).

This sequence belongs to the ribosome modulation factor family.

It localises to the cytoplasm. Its function is as follows. During stationary phase, converts 70S ribosomes to an inactive dimeric form (100S ribosomes). The protein is Ribosome modulation factor of Alcanivorax borkumensis (strain ATCC 700651 / DSM 11573 / NCIMB 13689 / SK2).